We begin with the raw amino-acid sequence, 560 residues long: MTPALNSLSQRIAARLSSSQRDDHYLHNDFHALASAALDMEKRFDKAEKIPLPPQKMRLAALRRLRLAQELTEREWRMVFYGLADNDPSYPDQPVLLEDDTFFPEVNNAIKKRLETKTLKRRDWAALCSSYFAYQNPSPETNPHWCVLRGHIAQGYMVVKAAIRREKSWMKTIEFYHDIFTPQAGGVISRQLLAGESNSLSSLEKIAQIPDSSWLWKRIFTVLLAQLDTLDDPQFLDKISWLLGLAAQWVRFRDDIMTATLTRYYHSIYRDQAHSALKQAALEYWDNPQLKSQQNKWHQYVSEPVAAMVRGWLAKQDLMHFFELLRGNGDVDQARLHYWLRFANQMGFTRIVMGTDAWQDRGSDFVKFREENKGRLSYLRGGRNFDNAMIMQINDYLFVEFSGTGNAMYAYRIGHAPFNPESRTLDINIHLKDKGRCVLRLPHTPRAEGYNKVRITGWMLKYDDELRQLGIRWMAEEAIKFVDKKASSPASMSDIKIINPLRDTAIQHLVEGSSCIVSDNRQKGGVLSVQLNTPDDTIERELLRLGFAPVAKEPHRYWIK.

In terms of biological role, component of antiviral defense system Zorya type I, composed of ZorA, ZorB, ZorC and ZorD. Expression of Zorya type I in E.coli (strain MG1655) confers 10,000-fold resistance to phage SECphi27, 100-fold resistance to lambda, and 10-fold resistance to T7. While most T7 infected Zorya-containing cells undergo abortive infection, a minority produce viable phage progeny. These eventually accumulate to a high multiplicity of infection, leading to culture collapse by 2 hours after initial infection. ZorA and ZorB probably assemble in the cell inner membrane and exert their effect there. In Escherichia coli O139:H28 (strain E24377A / ETEC), this protein is Zorya protein ZorC.